We begin with the raw amino-acid sequence, 340 residues long: Probable sugar phosphate/phosphate translocator At3g14410 (340 aa).

10 consecutive transmembrane segments (helical) span residues 12-32 (EFVTYAYILLYIALSSGQIFF), 44-64 (FPYPLGLTLLHMIFSSVLCFL), 80-100 (LEIYVTSVIPIGAMFAMTLWL), 110-130 (VAFAQMLKAIMPVAVFILGVA), 141-161 (LLIMSIISFGVLVASYGELNI), 163-183 (WIGVVYQMGGVVGEALRLIFM), 197-217 (ISLMYYVSPCSAICLFVPWIF), 234-254 (VVLTLNSLCTFALNLSVFLVI), 260-282 (LTIRVAGVVKDWVVVLVSALLFA), and 286-305 (LTIINLFGYAIAIAGVAAYN). The tract at residues 320 to 340 (ETPGDAESIPLVSQGNTNTER) is disordered. A compositionally biased stretch (polar residues) spans 330-340 (LVSQGNTNTER).

Belongs to the TPT transporter family. TPT (TC 2.A.7.9) subfamily.

Its subcellular location is the membrane. This Arabidopsis thaliana (Mouse-ear cress) protein is Probable sugar phosphate/phosphate translocator At3g14410.